The chain runs to 521 residues: Cholesterol side-chain cleavage enzyme, mitochondrial (521 aa).

Residues 1-39 (MLAKGLPPRSVLVKGCQTFLSAPKERLGHLRVPTSEGAG) constitute a mitochondrion transit peptide. Position 462 (cysteine 462) interacts with heme.

Belongs to the cytochrome P450 family. In terms of assembly, interacts with FDX1/adrenodoxin. Heme serves as cofactor.

The protein resides in the mitochondrion inner membrane. It carries out the reaction 6 reduced [adrenodoxin] + cholesterol + 3 O2 + 6 H(+) = 4-methylpentanal + pregnenolone + 6 oxidized [adrenodoxin] + 4 H2O. It catalyses the reaction 2 reduced [adrenodoxin] + cholesterol + O2 + 2 H(+) = (22R)-hydroxycholesterol + 2 oxidized [adrenodoxin] + H2O. The catalysed reaction is (22R)-hydroxycholesterol + 2 reduced [adrenodoxin] + O2 + 2 H(+) = (20R,22R)-20,22-dihydroxycholesterol + 2 oxidized [adrenodoxin] + H2O. The enzyme catalyses (20R,22R)-20,22-dihydroxycholesterol + 2 reduced [adrenodoxin] + O2 + 2 H(+) = 4-methylpentanal + pregnenolone + 2 oxidized [adrenodoxin] + 2 H2O. It functions in the pathway lipid metabolism; C21-steroid hormone metabolism. The protein operates within steroid metabolism; cholesterol metabolism. Functionally, a cytochrome P450 monooxygenase that catalyzes the side-chain hydroxylation and cleavage of cholesterol to pregnenolone, the precursor of most steroid hormones. Catalyzes three sequential oxidation reactions of cholesterol, namely the hydroxylation at C22 followed with the hydroxylation at C20 to yield 20R,22R-hydroxycholesterol that is further cleaved between C20 and C22 to yield the C21-steroid pregnenolone and 4-methylpentanal. Mechanistically, uses molecular oxygen inserting one oxygen atom into a substrate and reducing the second into a water molecule. Two electrons are provided by NADPH via a two-protein mitochondrial transfer system comprising flavoprotein FDXR (adrenodoxin/ferredoxin reductase) and nonheme iron-sulfur protein FDX1 or FDX2 (adrenodoxin/ferredoxin). In Macaca fascicularis (Crab-eating macaque), this protein is Cholesterol side-chain cleavage enzyme, mitochondrial (CYP11A1).